The primary structure comprises 213 residues: Nucleoside triphosphate pyrophosphatase (213 aa).

Asp-79 (proton acceptor) is an active-site residue.

The protein belongs to the Maf family. A divalent metal cation serves as cofactor.

It localises to the cytoplasm. The catalysed reaction is a ribonucleoside 5'-triphosphate + H2O = a ribonucleoside 5'-phosphate + diphosphate + H(+). It carries out the reaction a 2'-deoxyribonucleoside 5'-triphosphate + H2O = a 2'-deoxyribonucleoside 5'-phosphate + diphosphate + H(+). Nucleoside triphosphate pyrophosphatase. May have a dual role in cell division arrest and in preventing the incorporation of modified nucleotides into cellular nucleic acids. This is Nucleoside triphosphate pyrophosphatase from Mycobacterium leprae (strain Br4923).